The chain runs to 280 residues: Energy-coupling factor transporter ATP-binding protein EcfA2 (280 aa).

The 243-residue stretch at 3-245 (INLQNVSYTY…VSLLEKKQLG (243 aa)) folds into the ABC transporter domain. 40-47 (GHTGSGKS) lines the ATP pocket.

This sequence belongs to the ABC transporter superfamily. Energy-coupling factor EcfA family. Forms a stable energy-coupling factor (ECF) transporter complex composed of 2 membrane-embedded substrate-binding proteins (S component), 2 ATP-binding proteins (A component) and 2 transmembrane proteins (T component).

The protein resides in the cell membrane. In terms of biological role, ATP-binding (A) component of a common energy-coupling factor (ECF) ABC-transporter complex. Unlike classic ABC transporters this ECF transporter provides the energy necessary to transport a number of different substrates. This is Energy-coupling factor transporter ATP-binding protein EcfA2 from Streptococcus pyogenes serotype M1.